The chain runs to 151 residues: UPF0102 protein Ava_4800 (151 aa).

It belongs to the UPF0102 family.

This chain is UPF0102 protein Ava_4800, found in Trichormus variabilis (strain ATCC 29413 / PCC 7937) (Anabaena variabilis).